Consider the following 185-residue polypeptide: Peptidyl-tRNA hydrolase (185 aa).

Tyrosine 14 serves as a coordination point for tRNA. The active-site Proton acceptor is the histidine 19. TRNA is bound by residues phenylalanine 64, asparagine 66, and asparagine 112.

Belongs to the PTH family. In terms of assembly, monomer.

It is found in the cytoplasm. It catalyses the reaction an N-acyl-L-alpha-aminoacyl-tRNA + H2O = an N-acyl-L-amino acid + a tRNA + H(+). Hydrolyzes ribosome-free peptidyl-tRNAs (with 1 or more amino acids incorporated), which drop off the ribosome during protein synthesis, or as a result of ribosome stalling. Functionally, catalyzes the release of premature peptidyl moieties from peptidyl-tRNA molecules trapped in stalled 50S ribosomal subunits, and thus maintains levels of free tRNAs and 50S ribosomes. This is Peptidyl-tRNA hydrolase from Alkaliphilus oremlandii (strain OhILAs) (Clostridium oremlandii (strain OhILAs)).